Consider the following 869-residue polypeptide: DNA mismatch repair protein MutS (869 aa).

618–625 is a binding site for ATP; that stretch reads GPNMGGKS.

Belongs to the DNA mismatch repair MutS family.

This protein is involved in the repair of mismatches in DNA. It is possible that it carries out the mismatch recognition step. This protein has a weak ATPase activity. The sequence is that of DNA mismatch repair protein MutS from Zymomonas mobilis subsp. mobilis (strain ATCC 31821 / ZM4 / CP4).